The chain runs to 123 residues: Cysteine proteinase inhibitor 8 (123 aa).

The first 19 residues, 1–19 (MARIPLLLALLLAVSAAAA), serve as a signal peptide directing secretion. The Cystatin domain occupies 33–91 (GGWSPITDVGDPHIQELGGWAVERHASLSSDGLRFRRVTSGEQQVVSGMNYRLVVSASD). The Secondary area of contact signature appears at 76 to 80 (QVVSG).

The protein belongs to the cystatin family. Phytocystatin subfamily.

It localises to the secreted. Functionally, specific inhibitor of cysteine proteinases. Probably involved in the regulation of endogenous processes and in defense against pests and pathogens. This Oryza sativa subsp. japonica (Rice) protein is Cysteine proteinase inhibitor 8.